The primary structure comprises 246 residues: Probable phosphatase PBPRB2022 (246 aa).

The Zn(2+) site is built by histidine 8, histidine 10, histidine 16, histidine 41, glutamate 74, histidine 102, histidine 132, aspartate 193, and histidine 195.

Belongs to the PHP family. It depends on Zn(2+) as a cofactor.

The polypeptide is Probable phosphatase PBPRB2022 (Photobacterium profundum (strain SS9)).